We begin with the raw amino-acid sequence, 616 residues long: Chaperone protein HscA homolog (616 aa).

This sequence belongs to the heat shock protein 70 family.

Functionally, chaperone involved in the maturation of iron-sulfur cluster-containing proteins. Has a low intrinsic ATPase activity which is markedly stimulated by HscB. In Mannheimia succiniciproducens (strain KCTC 0769BP / MBEL55E), this protein is Chaperone protein HscA homolog.